The sequence spans 1849 residues: NADH-ubiquinone oxidoreductase chain 5 (1849 aa).

Helical transmembrane passes span 76-93, 98-120, 190-212, 222-244, 279-301, 316-338, 358-380, 390-412, 419-441, 483-505, 510-532, 536-558, 565-587, 621-640, 683-705, 718-740, 745-767, 797-819, 868-890, 905-927, 966-988, 1008-1030, 1073-1095, 1105-1127, 1172-1194, 1219-1241, 1248-1270, 1296-1318, 1330-1352, 1357-1379, 1418-1440, 1444-1466, 1478-1500, 1504-1526, 1533-1555, 1559-1581, 1602-1624, 1639-1661, 1719-1741, 1773-1795, and 1802-1824; these read YLLL…TVCY, LILL…YLQY, YWLC…IIGW, LVPT…IYLY, HLLT…ILSS, LALQ…ILCY, LEII…ILSV, VIIL…TILI, IAVY…IWLL, LLDA…CLGV, LFIA…LQVV, ISYI…VYSI, LIMY…IHTI, IWLI…STLV, WVRF…YVQF, LTRI…QGIL, IISY…LTIL, PTWV…LVTV, ILLL…LLSL, LTVQ…YIVL, LYSY…SLLE, PDLL…ELLL, LTVV…QILF, LATI…LSYL, TYLL…IYII, VYFL…FFYH, GIFY…TLYY, IITF…AIIL, FAYN…IVSY, MIIF…YARI, LFAL…FDFT, VIVF…FVWL, ALIH…APIL, VYTL…ILAT, KAVA…FLAF, LIYL…YIVH, IAIY…GFFA, VATF…LYRI, LLHL…LVTG, VRNI…TAIN, and IIYL…HYFL.

This sequence belongs to the complex I subunit 5 family.

The protein localises to the hydrogenosome membrane. The enzyme catalyses a ubiquinone + NADH + 5 H(+)(in) = a ubiquinol + NAD(+) + 4 H(+)(out). The polypeptide is NADH-ubiquinone oxidoreductase chain 5 (nad5) (Nyctotherus ovalis).